A 94-amino-acid polypeptide reads, in one-letter code: Cell division protein FtsB (94 aa).

Residues 1–3 are Cytoplasmic-facing; that stretch reads MRT. Residues 4 to 21 form a helical membrane-spanning segment; the sequence is FAIFLLIALGWLQYTLWF. Over 22 to 94 the chain is Periplasmic; sequence GKNGMSDYAQ…YRIIDENSEG (73 aa). Positions 33–71 form a coiled coil; it reads SNDVALQEEVNQGLRNRNEQMFAEIDDLKKGSEAIEERA.

This sequence belongs to the FtsB family. In terms of assembly, part of a complex composed of FtsB, FtsL and FtsQ.

The protein resides in the cell inner membrane. Essential cell division protein. May link together the upstream cell division proteins, which are predominantly cytoplasmic, with the downstream cell division proteins, which are predominantly periplasmic. This Aliivibrio fischeri (strain ATCC 700601 / ES114) (Vibrio fischeri) protein is Cell division protein FtsB.